The sequence spans 478 residues: Protein nucleotidyltransferase YdiU (478 aa).

The ATP site is built by glycine 84, glycine 86, arginine 87, lysine 107, aspartate 119, glycine 120, arginine 170, and arginine 177. Aspartate 246 serves as the catalytic Proton acceptor. Residues asparagine 247 and aspartate 256 each contribute to the Mg(2+) site. An ATP-binding site is contributed by aspartate 256.

It belongs to the SELO family. Mg(2+) serves as cofactor. Requires Mn(2+) as cofactor.

The enzyme catalyses L-seryl-[protein] + ATP = 3-O-(5'-adenylyl)-L-seryl-[protein] + diphosphate. The catalysed reaction is L-threonyl-[protein] + ATP = 3-O-(5'-adenylyl)-L-threonyl-[protein] + diphosphate. It carries out the reaction L-tyrosyl-[protein] + ATP = O-(5'-adenylyl)-L-tyrosyl-[protein] + diphosphate. It catalyses the reaction L-histidyl-[protein] + UTP = N(tele)-(5'-uridylyl)-L-histidyl-[protein] + diphosphate. The enzyme catalyses L-seryl-[protein] + UTP = O-(5'-uridylyl)-L-seryl-[protein] + diphosphate. The catalysed reaction is L-tyrosyl-[protein] + UTP = O-(5'-uridylyl)-L-tyrosyl-[protein] + diphosphate. Its function is as follows. Nucleotidyltransferase involved in the post-translational modification of proteins. It can catalyze the addition of adenosine monophosphate (AMP) or uridine monophosphate (UMP) to a protein, resulting in modifications known as AMPylation and UMPylation. The protein is Protein nucleotidyltransferase YdiU of Escherichia coli O1:K1 / APEC.